Reading from the N-terminus, the 781-residue chain is MRNNIAGPPITPVQATVKVTRVRQMDPTDLMSMKILLNILLRRTFESSLGMLNIRSGFYDLRNPSIHAIQIDGRGYDICWIPGFRLTTATLRGKLGLQILPETTKVRSKSMNELLTERRGNIHPSALAVITVMAMHNGKVFRVHSIVQGQTIVSPLANGNETDYFTYYSTRYRDKIDSAGLSLLRHNDYCNSVMQQDKFILKLTPLKRTQNGKVVRPCNVPSSLCIIISDNEIAPYGVSKLSTNRAAVALSTMSPDALLEKATAFAARLAEDTELQSLLGDYGFGFTSNPLELETFVCKPPKLMMDNTSRIVTIEDDSGGVFHNLLQSPGVSPIYYSNNNQPATGMPVWAIMVPRNLGNDYARRLRKELTERVRSLAGTTAPNIGDPPLIAVELSNQRREMYRVEPYKDAFKALLNKLRLEYKDARESEIVAKIQLVVIVIPGPKQDRGDLYKGIKQFYTHMGIVTQCLLAPKSSQNELQWYDQAVLRSVCQQIYAKAGGAVWAPVLPPQNVYSKSTMLCALDISRPKKTVGRPAEVPISTAGFISTYDGSFEYIYSQKKTLVPNRLNHGGELQQQTLMEAFIKNSCNVYLAFNNRILPDHIVIFRDGVSDSQISATLEVEIKSLYECLRQIYHKSNRPMCDLKVIVAQKTCAMRFSAVGGTVLRSGYYVINRSPDNRQQGSEFLMASQAIVHGTTPKPIRYKIIFDSMEASVDNDSFNQLIELTNAMAYGYVNWPQAISLPHVLHMAHHLSKFCGEVLRNGDDLFESCAIFGLQYRPFFI.

The region spanning 110–194 is the PAZ domain; sequence SMNELLTERR…RHNDYCNSVM (85 aa). Residues 436 to 760 form the Piwi domain; the sequence is LVVIVIPGPK…LSKFCGEVLR (325 aa).

The protein belongs to the argonaute family. Ago subfamily. In terms of assembly, interacts with miR2. Highly specific binding to the mRNA m7G-cap. May be a component of the RNA-induced silencing complex (RISC), a sequence-specific, multicomponent nuclease that destroys or silences messenger RNAs homologous to the silencing trigger.

The protein localises to the cytoplasm. In terms of biological role, plays an essential role in growth and, with Dicer, also involved in microRNA (miRNA)-mediated translational repression. The RNA interference pathway is implicated in antigenic variation having a role in regulation of variant-specific surface protein (VSP)-coding gene expression. Several VSP genes are transcribed but only transcripts encoding the VSP to be expressed accumulate. Antisense RNAs corresponding to the silenced VSP genes are detected. This Giardia intestinalis (Giardia lamblia) protein is Protein argonaute.